Reading from the N-terminus, the 521-residue chain is MTATTPSDKDRVIIFDTTLRDGEQCPGATMTFEEKLEVASLLDAMGVDVIEAGFPIASDGDFAAVHEIAKRAKNAVICGLSRAGAKDIDRCAEAIRPAKQGRIHTFLSTSPVHMKYKLQMDAEQVYQLVISAVTRARNHTDNVEWSSEDGTRTEFDFLCKCVEAAIKAGATTINIPDTVGYSVPEEYFDLFKRVRENVPNSDKAIFSVHCHDDLGMAVANSLAGIRGGARQIECTVNGIGERAGNTALEEVVMAMRVRNDKLPFWNKIDTTMLTRASKVVSAATSFPVQYNKAIVGRNAFAHESGIHQDGMLKNAETYEIMRPESVGVKQTSLVMGKHSGRHAFVHKLEEMGYKLGQNQLEDAFVRFKALADRKKEIYDEDIEALVDQEIAQSHDRIKLLSLTVIAGTHGPQRATMKLDVEGQTRIEEAEGNGPVDAVFNCIKALVPHVAKLELYQVHAVTQGTDAQAEVSVRLAHEGRSMTARAADPDTLVASAKAYLSALNKIVMKRERDLPVPEAAAS.

In terms of domain architecture, Pyruvate carboxyltransferase spans 12–274 (VIIFDTTLRD…WNKIDTTMLT (263 aa)). Residues Asp21, His209, His211, and Asn245 each contribute to the Mn(2+) site. The interval 398 to 521 (KLLSLTVIAG…DLPVPEAAAS (124 aa)) is regulatory domain.

It belongs to the alpha-IPM synthase/homocitrate synthase family. LeuA type 1 subfamily. As to quaternary structure, homodimer. It depends on Mn(2+) as a cofactor.

It is found in the cytoplasm. It carries out the reaction 3-methyl-2-oxobutanoate + acetyl-CoA + H2O = (2S)-2-isopropylmalate + CoA + H(+). It functions in the pathway amino-acid biosynthesis; L-leucine biosynthesis; L-leucine from 3-methyl-2-oxobutanoate: step 1/4. Functionally, catalyzes the condensation of the acetyl group of acetyl-CoA with 3-methyl-2-oxobutanoate (2-ketoisovalerate) to form 3-carboxy-3-hydroxy-4-methylpentanoate (2-isopropylmalate). The protein is 2-isopropylmalate synthase of Rhodopseudomonas palustris (strain BisB18).